The chain runs to 296 residues: Ribosomal RNA small subunit methyltransferase A (296 aa).

Residues 1-11 (MERSHVGRDCG) are compositionally biased toward basic and acidic residues. The tract at residues 1 to 24 (MERSHVGRDCGSRSSPRAFSVPTS) is disordered. Residues 12-24 (SRSSPRAFSVPTS) show a composition bias toward polar residues. The S-adenosyl-L-methionine site is built by asparagine 43, leucine 45, glycine 70, glutamate 91, aspartate 113, and asparagine 135.

The protein belongs to the class I-like SAM-binding methyltransferase superfamily. rRNA adenine N(6)-methyltransferase family. RsmA subfamily.

It is found in the cytoplasm. It catalyses the reaction adenosine(1518)/adenosine(1519) in 16S rRNA + 4 S-adenosyl-L-methionine = N(6)-dimethyladenosine(1518)/N(6)-dimethyladenosine(1519) in 16S rRNA + 4 S-adenosyl-L-homocysteine + 4 H(+). Its function is as follows. Specifically dimethylates two adjacent adenosines (A1518 and A1519) in the loop of a conserved hairpin near the 3'-end of 16S rRNA in the 30S particle. May play a critical role in biogenesis of 30S subunits. This Salinibacter ruber (strain DSM 13855 / M31) protein is Ribosomal RNA small subunit methyltransferase A.